Consider the following 305-residue polypeptide: Mitochondrial distribution and morphology protein 12 (305 aa).

Residues M1 to T236 enclose the SMP-LTD domain. The tract at residues L233 to E305 is disordered. Over residues F235–R248 the composition is skewed to acidic residues. A compositionally biased stretch (basic and acidic residues) spans N258–T269. Residues E279–E305 are compositionally biased toward polar residues.

The protein belongs to the MDM12 family. Component of the ER-mitochondria encounter structure (ERMES) or MDM complex, composed of MMM1, MDM10, MDM12 and MDM34. An MMM1 homodimer associates with one molecule of MDM12 on each side in a pairwise head-to-tail manner, and the SMP-LTD domains of MMM1 and MDM12 generate a continuous hydrophobic tunnel for phospholipid trafficking.

Its subcellular location is the mitochondrion outer membrane. The protein resides in the endoplasmic reticulum membrane. Functionally, component of the ERMES/MDM complex, which serves as a molecular tether to connect the endoplasmic reticulum (ER) and mitochondria. Components of this complex are involved in the control of mitochondrial shape and protein biogenesis, and function in nonvesicular lipid trafficking between the ER and mitochondria. MDM12 is required for the interaction of the ER-resident membrane protein MMM1 and the outer mitochondrial membrane-resident beta-barrel protein MDM10. The MDM12-MMM1 subcomplex functions in the major beta-barrel assembly pathway that is responsible for biogenesis of all mitochondrial outer membrane beta-barrel proteins, and acts in a late step after the SAM complex. The MDM10-MDM12-MMM1 subcomplex further acts in the TOM40-specific pathway after the action of the MDM12-MMM1 complex. Essential for establishing and maintaining the structure of mitochondria and maintenance of mtDNA nucleoids. This chain is Mitochondrial distribution and morphology protein 12, found in Kluyveromyces lactis (strain ATCC 8585 / CBS 2359 / DSM 70799 / NBRC 1267 / NRRL Y-1140 / WM37) (Yeast).